Reading from the N-terminus, the 930-residue chain is Translation initiation factor IF-2 (930 aa).

The segment at 51–325 (PGAGKSAAKP…TREIGGVKVP (275 aa)) is disordered. Composition is skewed to low complexity over residues 56–111 (SAAK…KPGV) and 121–162 (TPAA…GNNP). Over residues 263 to 295 (RPGGGPGGGPGRPGGPGGRGGRGNAQGAFGRGG) the composition is skewed to gly residues. Basic residues predominate over residues 296–307 (GPRKGRKSKRAK). The segment covering 308-320 (RQEFEQQHTREIG) has biased composition (basic and acidic residues). The tr-type G domain maps to 422–596 (PRPAVVTVMG…LTADAALELT (175 aa)). The G1 stretch occupies residues 431–438 (GHVDHGKT). 431–438 (GHVDHGKT) provides a ligand contact to GTP. Residues 456–460 (GITQH) form a G2 region. The G3 stretch occupies residues 481 to 484 (DTPG). Residues 481–485 (DTPGH) and 535–538 (NKID) each bind GTP. The interval 535–538 (NKID) is G4. The interval 571–573 (SAR) is G5.

It belongs to the TRAFAC class translation factor GTPase superfamily. Classic translation factor GTPase family. IF-2 subfamily.

Its subcellular location is the cytoplasm. One of the essential components for the initiation of protein synthesis. Protects formylmethionyl-tRNA from spontaneous hydrolysis and promotes its binding to the 30S ribosomal subunits. Also involved in the hydrolysis of GTP during the formation of the 70S ribosomal complex. The chain is Translation initiation factor IF-2 from Micrococcus luteus (strain ATCC 4698 / DSM 20030 / JCM 1464 / CCM 169 / CCUG 5858 / IAM 1056 / NBRC 3333 / NCIMB 9278 / NCTC 2665 / VKM Ac-2230) (Micrococcus lysodeikticus).